Here is a 465-residue protein sequence, read N- to C-terminus: Probable glucan endo-1,3-beta-glucosidase eglC (465 aa).

Residues 1–19 (MFTKTQILALALSIASAEA) form the signal peptide. The active-site Proton donor is Glu-128. A glycan (N-linked (GlcNAc...) asparagine) is linked at Asn-183. The active-site Nucleophile is the Glu-239. Residue Asn-318 is glycosylated (N-linked (GlcNAc...) asparagine). Composition is skewed to low complexity over residues 320–333 (SSAS…SAQS) and 380–438 (SPSA…ATPA). 2 disordered regions span residues 320–356 (SSAS…GHGG) and 380–440 (SPSA…PADF). Residue Gly-442 is the site of GPI-anchor amidated glycine attachment. The propeptide at 443 to 465 (AGSRLSGSIFGAAMLVAALAVAL) is removed in mature form.

Belongs to the glycosyl hydrolase 17 family. The GPI-anchor is attached to the protein in the endoplasmic reticulum and serves to target the protein to the cell surface. There, the glucosamine-inositol phospholipid moiety is cleaved off and the GPI-modified mannoprotein is covalently attached via its lipidless GPI glycan remnant to the 1,6-beta-glucan of the outer cell wall layer.

It localises to the cell membrane. Its subcellular location is the secreted. The protein resides in the cell wall. The enzyme catalyses Hydrolysis of (1-&gt;3)-beta-D-glucosidic linkages in (1-&gt;3)-beta-D-glucans.. Functionally, glucanases play a role in cell expansion during growth, in cell-cell fusion during mating, and in spore release during sporulation. This enzyme may be involved in beta-glucan degradation and also function biosynthetically as a transglycosylase. The protein is Probable glucan endo-1,3-beta-glucosidase eglC (eglC) of Emericella nidulans (strain FGSC A4 / ATCC 38163 / CBS 112.46 / NRRL 194 / M139) (Aspergillus nidulans).